Here is a 588-residue protein sequence, read N- to C-terminus: Autophagy-related protein 22-1 (588 aa).

A helical membrane pass occupies residues 35–55 (YGWAAEVFTVCAMGSFLPITL). Residue N84 is glycosylated (N-linked (GlcNAc...) asparagine). The next 3 membrane-spanning stretches (helical) occupy residues 109 to 129 (TASFAMYTFSVSVLIQAILII), 144 to 164 (LLVSFAAIGSICTMLILAVTP), and 168 to 188 (LLGGLFAIVANTCLGASFVLL). An N-linked (GlcNAc...) asparagine glycan is attached at N255. 8 helical membrane passes run 270-290 (GIGIGYIGAVFLQGICILVIV), 301-321 (LVLFLIGLWWFIFTIPAAFWL), 365-385 (ILLFLASWFLLSDGIATVSGT), 399-419 (AALGMINVITMISGVFGAFSW), 434-454 (IIACIFLFELVPLYGLLGFIP), 471-493 (FPLGVIYGLVMGGLSSYCRSFFG), 507-527 (LYAITDKGSSVFGPAIVGFIT), and 536-556 (AFFFLAILILLPLPLMLLVDA).

This sequence belongs to the ATG22 family.

The protein localises to the vacuole membrane. Functionally, vacuolar effluxer which mediate the efflux of amino acids resulting from autophagic degradation. The release of autophagic amino acids allows the maintenance of protein synthesis and viability during nitrogen starvation. This Emericella nidulans (strain FGSC A4 / ATCC 38163 / CBS 112.46 / NRRL 194 / M139) (Aspergillus nidulans) protein is Autophagy-related protein 22-1 (atg22-1).